The following is a 366-amino-acid chain: Dual-specificity RNA methyltransferase RlmN (366 aa).

Glu-102 acts as the Proton acceptor in catalysis. One can recognise a Radical SAM core domain in the interval 108-340; the sequence is DEGRNTLCVS…TTTRKTRGRD (233 aa). Cys-115 and Cys-345 are disulfide-bonded. [4Fe-4S] cluster-binding residues include Cys-122, Cys-126, and Cys-129. Residues 171–172, Ser-203, 225–227, and Asn-302 contribute to the S-adenosyl-L-methionine site; these read GE and SLH. Cys-345 (S-methylcysteine intermediate) is an active-site residue.

This sequence belongs to the radical SAM superfamily. RlmN family. Requires [4Fe-4S] cluster as cofactor.

Its subcellular location is the cytoplasm. The catalysed reaction is adenosine(2503) in 23S rRNA + 2 reduced [2Fe-2S]-[ferredoxin] + 2 S-adenosyl-L-methionine = 2-methyladenosine(2503) in 23S rRNA + 5'-deoxyadenosine + L-methionine + 2 oxidized [2Fe-2S]-[ferredoxin] + S-adenosyl-L-homocysteine. The enzyme catalyses adenosine(37) in tRNA + 2 reduced [2Fe-2S]-[ferredoxin] + 2 S-adenosyl-L-methionine = 2-methyladenosine(37) in tRNA + 5'-deoxyadenosine + L-methionine + 2 oxidized [2Fe-2S]-[ferredoxin] + S-adenosyl-L-homocysteine. Its function is as follows. Specifically methylates position 2 of adenine 2503 in 23S rRNA and position 2 of adenine 37 in tRNAs. m2A2503 modification seems to play a crucial role in the proofreading step occurring at the peptidyl transferase center and thus would serve to optimize ribosomal fidelity. The protein is Dual-specificity RNA methyltransferase RlmN of Methylococcus capsulatus (strain ATCC 33009 / NCIMB 11132 / Bath).